The sequence spans 426 residues: MLDPALLRQHPADLAERLRSTRGFDLNTAELESLESERKRIQVRTQELQSLRNSKSKAIGQAKAKGEDVAALMAEVAGFGDELKASEDALDVIRAQLEGIALGIPNLPAANVPAGKDESENVEQARWGTPRQFDFAVKDHVELGAPHGWLDGETAAKLSGARFTVLRGPIARLHRALAQFMLDLHVGEHGYEETNVPLLVNADSMRGTGQLPKFEDDLFQTEVGDSKRYLIPTSEVPLTNIVRDAIVDAERLPLRMTAHSMCFRAEAGSGGRDTRGMIRQHQFEKVELVTACSPEDSEAEHQRMTRCAEVVLEKLGLPYRKVLLCTGDMGFSAIKTYDLEVWLPSQATYREISSCSNCGDFQARRMQARWRNPASGKPELLHTLNGSGTAVGRAMIAVMENYQNADGSIDVPDALRPYMGGLERIG.

Residue 233–235 participates in L-serine binding; the sequence is TSE. 264–266 contributes to the ATP binding site; sequence RAE. An L-serine-binding site is contributed by glutamate 287. Residue 351-354 participates in ATP binding; the sequence is EISS. Residue serine 387 participates in L-serine binding.

Belongs to the class-II aminoacyl-tRNA synthetase family. Type-1 seryl-tRNA synthetase subfamily. In terms of assembly, homodimer. The tRNA molecule binds across the dimer.

Its subcellular location is the cytoplasm. The catalysed reaction is tRNA(Ser) + L-serine + ATP = L-seryl-tRNA(Ser) + AMP + diphosphate + H(+). The enzyme catalyses tRNA(Sec) + L-serine + ATP = L-seryl-tRNA(Sec) + AMP + diphosphate + H(+). The protein operates within aminoacyl-tRNA biosynthesis; selenocysteinyl-tRNA(Sec) biosynthesis; L-seryl-tRNA(Sec) from L-serine and tRNA(Sec): step 1/1. Catalyzes the attachment of serine to tRNA(Ser). Is also able to aminoacylate tRNA(Sec) with serine, to form the misacylated tRNA L-seryl-tRNA(Sec), which will be further converted into selenocysteinyl-tRNA(Sec). This is Serine--tRNA ligase from Xanthomonas campestris pv. campestris (strain 8004).